Reading from the N-terminus, the 591-residue chain is Protein phosphatase EYA1 (591 aa).

3 disordered regions span residues 1–95, 150–169, and 239–319; these read MEMQ…SYPH, GLSQ…GTSF, and MTSS…PDSD. Residues 8–23 show a composition bias toward low complexity; that stretch reads SPHSRLSGSSESPSGP. Over residues 28 to 53 the composition is skewed to polar residues; the sequence is SHINSTSMTPNGTEVKTEPMSSSEIA. The segment covering 56–75 has biased composition (low complexity); that stretch reads AADGSLDSFSGSALGSSSFS. Residues 78 to 87 show a composition bias toward pro residues; it reads PAHPFSPPQI. Residues 240 to 252 are compositionally biased toward low complexity; sequence TSSNTSPTTPSTN. Polar residues predominate over residues 253–286; the sequence is ATYQLQEPPSGVTSQAVTDPTAEYSTIHSPSTPI. Positions 287–302 are enriched in basic and acidic residues; sequence KETDSERLRRGSDGKS. Aspartate 327 serves as the catalytic Nucleophile. Mg(2+) is bound by residues aspartate 327, aspartate 329, and aspartate 555. The Proton donor role is filled by aspartate 329.

This sequence belongs to the HAD-like hydrolase superfamily. EYA family. As to quaternary structure, probably interacts with SIX2, SIX4 and SIX5. Interacts with H2AX in response to DNA damage. Interacts with SIX3; promotes EYA1 translocation to the nucleus. It depends on Mg(2+) as a cofactor. Sumoylated with SUMO1. Extensively expressed in cranial placodes, branchial arches, CNS and developing eye and nose.

The protein localises to the cytoplasm. Its subcellular location is the nucleus. The enzyme catalyses O-phospho-L-tyrosyl-[protein] + H2O = L-tyrosyl-[protein] + phosphate. It catalyses the reaction O-phospho-L-seryl-[protein] + H2O = L-seryl-[protein] + phosphate. The catalysed reaction is O-phospho-L-threonyl-[protein] + H2O = L-threonyl-[protein] + phosphate. Functions both as protein phosphatase and as transcriptional coactivator for SIX1, and probably also for SIX2, SIX4 and SIX5. Tyrosine phosphatase that dephosphorylates 'Tyr-142' of histone H2AX (H2AXY142ph) and promotes efficient DNA repair via the recruitment of DNA repair complexes containing MDC1. 'Tyr-142' phosphorylation of histone H2AX plays a central role in DNA repair and acts as a mark that distinguishes between apoptotic and repair responses to genotoxic stress. Its function as histone phosphatase may contribute to its function in transcription regulation during organogenesis. Also has phosphatase activity with proteins phosphorylated on Ser and Thr residues (in vitro). Required for normal embryonic development of the craniofacial and trunk skeleton, kidneys and ears. Together with SIX1, it plays an important role in hypaxial muscle development; in this it is functionally redundant with EYA2. In Mus musculus (Mouse), this protein is Protein phosphatase EYA1 (Eya1).